The chain runs to 251 residues: DNA repair protein RecO (251 aa).

The protein belongs to the RecO family.

In terms of biological role, involved in DNA repair and RecF pathway recombination. The sequence is that of DNA repair protein RecO from Acetivibrio thermocellus (strain ATCC 27405 / DSM 1237 / JCM 9322 / NBRC 103400 / NCIMB 10682 / NRRL B-4536 / VPI 7372) (Clostridium thermocellum).